Reading from the N-terminus, the 305-residue chain is Aurasperone B biosynthesis cluster protein A (305 aa).

Positions 1–26 are cleaved as a signal peptide; that stretch reads MSIFFSIRFWPAAISAAILWLPQVLG. Residues Asn29, Asn34, Asn64, Asn83, Asn132, Asn183, Asn218, and Asn288 are each glycosylated (N-linked (GlcNAc...) asparagine).

Belongs to the bfoA family.

Its function is as follows. Part of the gene cluster that mediates the biosynthesis of aurasperone B, a dimeric gamma-naphthopyrone. The first step in the biosynthesis of aurasperone B is the production of gamma-naphthopyrone precursor YWA1 by the non-reducing polyketide synthase albA, via condensation of one acetyl-CoA starter unit with 6 malonyl-CoA units. YWA1 is then methylated by aunE at position C-6 to yield foncesin which is further methylated at position C-8 by aunD to produce fonsecin B. A key enzyme in the biosynthetic pathway is the cytochrome P450 monooxygenase aunB which catalyzes the oxidative dimerization of fonsecin B to aurasperone B. AunB also catalyzes the oxidative dimerization of rubrofusarin B into aurasperone A. This Aspergillus niger (strain ATCC MYA-4892 / CBS 513.88 / FGSC A1513) protein is Aurasperone B biosynthesis cluster protein A.